The following is a 223-amino-acid chain: Small ribosomal subunit protein uS3 (223 aa).

Positions 39–108 (IRKFVKKKGA…VILINIVEVK (70 aa)) constitute a KH type-2 domain.

Belongs to the universal ribosomal protein uS3 family. As to quaternary structure, part of the 30S ribosomal subunit. Forms a tight complex with proteins S10 and S14.

Functionally, binds the lower part of the 30S subunit head. Binds mRNA in the 70S ribosome, positioning it for translation. This chain is Small ribosomal subunit protein uS3, found in Clostridium kluyveri (strain NBRC 12016).